The following is a 242-amino-acid chain: Uridylate kinase (242 aa).

Residue 11–14 coordinates ATP; the sequence is KLSG. The tract at residues 19 to 24 is involved in allosteric activation by GTP; the sequence is GDKGVG. G53 lines the UMP pocket. 2 residues coordinate ATP: G54 and R58. Residues D73 and 134-141 each bind UMP; that span reads IGSPYFST. N162, Y168, and D171 together coordinate ATP.

It belongs to the UMP kinase family. Homohexamer.

It is found in the cytoplasm. It carries out the reaction UMP + ATP = UDP + ADP. Its pathway is pyrimidine metabolism; CTP biosynthesis via de novo pathway; UDP from UMP (UMPK route): step 1/1. Its activity is regulated as follows. Allosterically activated by GTP. Inhibited by UTP. Functionally, catalyzes the reversible phosphorylation of UMP to UDP. The chain is Uridylate kinase from Streptococcus agalactiae serotype Ia (strain ATCC 27591 / A909 / CDC SS700).